The chain runs to 445 residues: Tubulin beta-2 chain (445 aa).

Residues Gln-12, Glu-73, Ser-142, Gly-146, Thr-147, Gly-148, Asn-208, and Asn-230 each coordinate GTP. Residue Glu-73 coordinates Mg(2+).

Belongs to the tubulin family. Dimer of alpha and beta chains. A typical microtubule is a hollow water-filled tube with an outer diameter of 25 nm and an inner diameter of 15 nM. Alpha-beta heterodimers associate head-to-tail to form protofilaments running lengthwise along the microtubule wall with the beta-tubulin subunit facing the microtubule plus end conferring a structural polarity. Microtubules usually have 13 protofilaments but different protofilament numbers can be found in some organisms and specialized cells. Requires Mg(2+) as cofactor.

It is found in the cytoplasm. The protein resides in the cytoskeleton. Tubulin is the major constituent of microtubules, a cylinder consisting of laterally associated linear protofilaments composed of alpha- and beta-tubulin heterodimers. Microtubules grow by the addition of GTP-tubulin dimers to the microtubule end, where a stabilizing cap forms. Below the cap, tubulin dimers are in GDP-bound state, owing to GTPase activity of alpha-tubulin. The polypeptide is Tubulin beta-2 chain (TUBB2) (Suillus bovinus (Jersey cow bolete)).